The following is a 174-amino-acid chain: ATP-dependent protease subunit HslV (174 aa).

Thr-2 is a catalytic residue. Residues Gly-159, Asp-162, and Thr-165 each contribute to the Na(+) site.

The protein belongs to the peptidase T1B family. HslV subfamily. In terms of assembly, a double ring-shaped homohexamer of HslV is capped on each side by a ring-shaped HslU homohexamer. The assembly of the HslU/HslV complex is dependent on binding of ATP.

The protein localises to the cytoplasm. The enzyme catalyses ATP-dependent cleavage of peptide bonds with broad specificity.. Allosterically activated by HslU binding. Its function is as follows. Protease subunit of a proteasome-like degradation complex believed to be a general protein degrading machinery. In Lacticaseibacillus casei (strain BL23) (Lactobacillus casei), this protein is ATP-dependent protease subunit HslV.